The following is a 407-amino-acid chain: Probable tRNA sulfurtransferase (407 aa).

The THUMP domain occupies 61–165 (EEMCNRLKKV…LDAIYMYDQV (105 aa)). ATP-binding positions include 183–184 (ML), 208–209 (HF), arginine 265, glycine 287, and glutamine 296.

This sequence belongs to the ThiI family.

Its subcellular location is the cytoplasm. The enzyme catalyses [ThiI sulfur-carrier protein]-S-sulfanyl-L-cysteine + a uridine in tRNA + 2 reduced [2Fe-2S]-[ferredoxin] + ATP + H(+) = [ThiI sulfur-carrier protein]-L-cysteine + a 4-thiouridine in tRNA + 2 oxidized [2Fe-2S]-[ferredoxin] + AMP + diphosphate. The catalysed reaction is [ThiS sulfur-carrier protein]-C-terminal Gly-Gly-AMP + S-sulfanyl-L-cysteinyl-[cysteine desulfurase] + AH2 = [ThiS sulfur-carrier protein]-C-terminal-Gly-aminoethanethioate + L-cysteinyl-[cysteine desulfurase] + A + AMP + 2 H(+). The protein operates within cofactor biosynthesis; thiamine diphosphate biosynthesis. Its function is as follows. Catalyzes the ATP-dependent transfer of a sulfur to tRNA to produce 4-thiouridine in position 8 of tRNAs, which functions as a near-UV photosensor. Also catalyzes the transfer of sulfur to the sulfur carrier protein ThiS, forming ThiS-thiocarboxylate. This is a step in the synthesis of thiazole, in the thiamine biosynthesis pathway. The sulfur is donated as persulfide by IscS. The chain is Probable tRNA sulfurtransferase from Staphylococcus saprophyticus subsp. saprophyticus (strain ATCC 15305 / DSM 20229 / NCIMB 8711 / NCTC 7292 / S-41).